Here is a 212-residue protein sequence, read N- to C-terminus: Large ribosomal subunit protein uL3 (212 aa).

Position 153 is an N5-methylglutamine (Gln-153).

Belongs to the universal ribosomal protein uL3 family. In terms of assembly, part of the 50S ribosomal subunit. Forms a cluster with proteins L14 and L19. Post-translationally, methylated by PrmB.

Its function is as follows. One of the primary rRNA binding proteins, it binds directly near the 3'-end of the 23S rRNA, where it nucleates assembly of the 50S subunit. The polypeptide is Large ribosomal subunit protein uL3 (Shewanella woodyi (strain ATCC 51908 / MS32)).